We begin with the raw amino-acid sequence, 180 residues long: MSRIGRLPIPIPKGVEVKVSPDNVVTVKGAKGTLEKKFPPIVNIEVRDGEVVVTRKGDDKEERAMHGTTRAIIANMVKGVTEGFEKALEIVGVGYRAAKQGKKLILNVGYSHPVEIEEEPGIEIIVEGNNRIIVRGADKERVGQVAANIRRVREPDAYQGKGIRYVGEVVRLKEGKTGKK.

This sequence belongs to the universal ribosomal protein uL6 family. In terms of assembly, part of the 50S ribosomal subunit.

Its function is as follows. This protein binds to the 23S rRNA, and is important in its secondary structure. It is located near the subunit interface in the base of the L7/L12 stalk, and near the tRNA binding site of the peptidyltransferase center. In Caldanaerobacter subterraneus subsp. tengcongensis (strain DSM 15242 / JCM 11007 / NBRC 100824 / MB4) (Thermoanaerobacter tengcongensis), this protein is Large ribosomal subunit protein uL6.